The chain runs to 235 residues: Phosphoribosylaminoimidazole-succinocarboxamide synthase (235 aa).

Belongs to the SAICAR synthetase family.

It carries out the reaction 5-amino-1-(5-phospho-D-ribosyl)imidazole-4-carboxylate + L-aspartate + ATP = (2S)-2-[5-amino-1-(5-phospho-beta-D-ribosyl)imidazole-4-carboxamido]succinate + ADP + phosphate + 2 H(+). It functions in the pathway purine metabolism; IMP biosynthesis via de novo pathway; 5-amino-1-(5-phospho-D-ribosyl)imidazole-4-carboxamide from 5-amino-1-(5-phospho-D-ribosyl)imidazole-4-carboxylate: step 1/2. The chain is Phosphoribosylaminoimidazole-succinocarboxamide synthase (purC) from Streptococcus pneumoniae serotype 4 (strain ATCC BAA-334 / TIGR4).